The primary structure comprises 355 residues: Uroporphyrinogen decarboxylase (355 aa).

Residues 23 to 27 (RQAGR), Asp-72, Tyr-148, Ser-203, and His-321 each bind substrate.

It belongs to the uroporphyrinogen decarboxylase family. Homodimer.

It is found in the cytoplasm. It catalyses the reaction uroporphyrinogen III + 4 H(+) = coproporphyrinogen III + 4 CO2. The protein operates within porphyrin-containing compound metabolism; protoporphyrin-IX biosynthesis; coproporphyrinogen-III from 5-aminolevulinate: step 4/4. Functionally, catalyzes the decarboxylation of four acetate groups of uroporphyrinogen-III to yield coproporphyrinogen-III. This Chloroflexus aurantiacus (strain ATCC 29366 / DSM 635 / J-10-fl) protein is Uroporphyrinogen decarboxylase.